We begin with the raw amino-acid sequence, 53 residues long: UPF0391 membrane protein Bxeno_A2958 (53 aa).

Transmembrane regions (helical) follow at residues Ala5–Ala25 and Ile30–Val50.

It belongs to the UPF0391 family.

The protein resides in the cell membrane. The sequence is that of UPF0391 membrane protein Bxeno_A2958 from Paraburkholderia xenovorans (strain LB400).